The chain runs to 264 residues: Teichoic acids export ATP-binding protein TagH (264 aa).

Residues 22–243 enclose the ABC transporter domain; that stretch reads ERLKDVIVPF…YEKFLNDFKK (222 aa). 57-64 contributes to the ATP binding site; that stretch reads GINGSGKS.

It belongs to the ABC transporter superfamily. Teichoic acids exporter (TC 3.A.1.104.1) family. In terms of assembly, the complex is composed of two ATP-binding proteins (TagH) and two transmembrane proteins (TagG).

Its subcellular location is the cell membrane. The catalysed reaction is ATP + H2O + teichoic acidSide 1 = ADP + phosphate + teichoic acidSide 2.. Its function is as follows. Part of the ABC transporter complex TagGH involved in teichoic acids export. Responsible for energy coupling to the transport system. This Staphylococcus saprophyticus subsp. saprophyticus (strain ATCC 15305 / DSM 20229 / NCIMB 8711 / NCTC 7292 / S-41) protein is Teichoic acids export ATP-binding protein TagH.